Reading from the N-terminus, the 107-residue chain is Large ribosomal subunit protein uL24 (107 aa).

The protein belongs to the universal ribosomal protein uL24 family. As to quaternary structure, part of the 50S ribosomal subunit.

Functionally, one of two assembly initiator proteins, it binds directly to the 5'-end of the 23S rRNA, where it nucleates assembly of the 50S subunit. In terms of biological role, one of the proteins that surrounds the polypeptide exit tunnel on the outside of the subunit. This Neisseria meningitidis serogroup C (strain 053442) protein is Large ribosomal subunit protein uL24.